Here is a 230-residue protein sequence, read N- to C-terminus: 2,3-bisphosphoglycerate-dependent phosphoglycerate mutase 2 (230 aa).

Residues Arg8–Asn15, Thr21–Gly22, Arg60, Glu87–Tyr90, Lys98, Arg114–Arg115, and Gly183–Asn184 each bind substrate. Catalysis depends on His9, which acts as the Tele-phosphohistidine intermediate. Glu87 serves as the catalytic Proton donor/acceptor.

Belongs to the phosphoglycerate mutase family. BPG-dependent PGAM subfamily.

The enzyme catalyses (2R)-2-phosphoglycerate = (2R)-3-phosphoglycerate. The protein operates within carbohydrate degradation; glycolysis; pyruvate from D-glyceraldehyde 3-phosphate: step 3/5. Its function is as follows. Catalyzes the interconversion of 2-phosphoglycerate and 3-phosphoglycerate. The protein is 2,3-bisphosphoglycerate-dependent phosphoglycerate mutase 2 of Lactiplantibacillus plantarum (strain ATCC BAA-793 / NCIMB 8826 / WCFS1) (Lactobacillus plantarum).